A 189-amino-acid polypeptide reads, in one-letter code: Cancer/testis antigen family 45 member A1 (189 aa).

A compositionally biased stretch (basic and acidic residues) spans 1-23 (MTDKTEKVAVDPETVFKRPRECD). Disordered regions lie at residues 1–27 (MTDK…SPSY) and 83–118 (RMMQ…SPKS).

It belongs to the CT45 family. Testis specific. Expressed in cancer cell lines.

The protein resides in the nucleus. The sequence is that of Cancer/testis antigen family 45 member A1 from Homo sapiens (Human).